The following is a 363-amino-acid chain: 3-dehydroquinate synthase (363 aa).

NAD(+)-binding positions include 109–113 (GASTD), 133–134 (TT), K146, and K155. Zn(2+)-binding residues include E188, H251, and H267.

It belongs to the sugar phosphate cyclases superfamily. Dehydroquinate synthase family. The cofactor is NAD(+). Co(2+) is required as a cofactor. Requires Zn(2+) as cofactor.

The protein localises to the cytoplasm. It catalyses the reaction 7-phospho-2-dehydro-3-deoxy-D-arabino-heptonate = 3-dehydroquinate + phosphate. Its pathway is metabolic intermediate biosynthesis; chorismate biosynthesis; chorismate from D-erythrose 4-phosphate and phosphoenolpyruvate: step 2/7. Catalyzes the conversion of 3-deoxy-D-arabino-heptulosonate 7-phosphate (DAHP) to dehydroquinate (DHQ). This Streptomyces coelicolor (strain ATCC BAA-471 / A3(2) / M145) protein is 3-dehydroquinate synthase.